Consider the following 102-residue polypeptide: Co-chaperonin GroES (102 aa).

This sequence belongs to the GroES chaperonin family. Heptamer of 7 subunits arranged in a ring. Interacts with the chaperonin GroEL.

The protein resides in the cytoplasm. Together with the chaperonin GroEL, plays an essential role in assisting protein folding. The GroEL-GroES system forms a nano-cage that allows encapsulation of the non-native substrate proteins and provides a physical environment optimized to promote and accelerate protein folding. GroES binds to the apical surface of the GroEL ring, thereby capping the opening of the GroEL channel. This Streptomyces griseus subsp. griseus (strain JCM 4626 / CBS 651.72 / NBRC 13350 / KCC S-0626 / ISP 5235) protein is Co-chaperonin GroES.